The following is a 645-amino-acid chain: COP9 signalosome complex subunit 10 (645 aa).

Over residues 1-45 (MSDEDNNYDDFMLSDDEGMESIEMEEETDDEDKQNIEINEDNSQD) the composition is skewed to acidic residues. The interval 1-63 (MSDEDNNYDD…HKQHEQGTFE (63 aa)) is disordered. The segment covering 46 to 63 (DQDRGAARHKQHEQGTFE) has biased composition (basic and acidic residues). A PCI domain is found at 348–543 (DLSFALMRYY…DLVYFGDENK (196 aa)).

Component of a COP9 signalosome-like (CSN) complex, composed of at least RRI1/CSN5, CSN9, RRI2/CSN10, PCI8/CSN11, CSN12 and CSI1. In the complex, it probably interacts directly with CSN12.

Its subcellular location is the cytoplasm. The protein localises to the nucleus. Functionally, component of the COP9 signalosome (CSN) complex that acts as an regulator of the ubiquitin (Ubl) conjugation pathway by mediating the deneddylation of the cullin subunit of SCF-type E3 ubiquitin-protein ligase complexes. The CSN complex is involved in the regulation of the mating pheromone response. The polypeptide is COP9 signalosome complex subunit 10 (RRI2) (Saccharomyces cerevisiae (strain ATCC 204508 / S288c) (Baker's yeast)).